Reading from the N-terminus, the 242-residue chain is tRNA (guanine-N(1)-)-methyltransferase (242 aa).

S-adenosyl-L-methionine contacts are provided by residues Gly-111 and 130 to 135; that span reads IGDYVL.

Belongs to the RNA methyltransferase TrmD family. Homodimer.

Its subcellular location is the cytoplasm. The catalysed reaction is guanosine(37) in tRNA + S-adenosyl-L-methionine = N(1)-methylguanosine(37) in tRNA + S-adenosyl-L-homocysteine + H(+). Its function is as follows. Specifically methylates guanosine-37 in various tRNAs. The protein is tRNA (guanine-N(1)-)-methyltransferase of Onion yellows phytoplasma (strain OY-M).